The following is a 432-amino-acid chain: MPDYVNWLRHASPYINSHRDRTFVVMLPGEGVEHPNFGNIVHDLVLLHSLGARLVLVHGSRPQIESRLAARGLAPRYHRDLRVTDAPTLECVIDAVGSLRIAIEARLSMDMAASPMQGARLRVAGGNLVTARPIGVVEGVDYHHTGEVRRIDRKGIGRLLDERSIVLLSPLGYSPTGEIFNLACEDVAMRAAIDLEAEKLILYGAEQGLLDASGKLVRELRPQQVPAHLQRLGNSYQAELLDAAAQACRAGVKRSHIVSYTEDGALLSELFTRTGNGTLVAQEQFEQLREAGIEDVGGLIELIRPLEEQGILVRRSREVLEREIEQFSIVEREGLIIACAALYPIADSEAGELACLAVNPEYRHGGRGDELLERIEERARGLGLKTLFVLTTRTAHWFRERGFQPSSVERLPAARASLYNFQRNSQVFEKSL.

The N-acetyltransferase domain occupies 286–425 (EQLREAGIED…ASLYNFQRNS (140 aa)).

The protein belongs to the acetyltransferase family. ArgA subfamily.

The protein resides in the cytoplasm. The enzyme catalyses L-glutamate + acetyl-CoA = N-acetyl-L-glutamate + CoA + H(+). It functions in the pathway amino-acid biosynthesis; L-arginine biosynthesis; N(2)-acetyl-L-ornithine from L-glutamate: step 1/4. The chain is Amino-acid acetyltransferase from Pseudomonas paraeruginosa (strain DSM 24068 / PA7) (Pseudomonas aeruginosa (strain PA7)).